Reading from the N-terminus, the 243-residue chain is Small ribosomal subunit protein eS4 (243 aa).

One can recognise an S4 RNA-binding domain in the interval 37-99 (IPLALLLKHY…SDLYFRIVPD (63 aa)).

This sequence belongs to the eukaryotic ribosomal protein eS4 family.

This Sulfurisphaera tokodaii (strain DSM 16993 / JCM 10545 / NBRC 100140 / 7) (Sulfolobus tokodaii) protein is Small ribosomal subunit protein eS4 (rps4e).